The sequence spans 151 residues: UPF0178 protein CPS_3584 (151 aa).

It belongs to the UPF0178 family.

The chain is UPF0178 protein CPS_3584 from Colwellia psychrerythraea (strain 34H / ATCC BAA-681) (Vibrio psychroerythus).